A 374-amino-acid chain; its full sequence is Aminodeoxychorismate lyase (374 aa).

It belongs to the class-IV pyridoxal-phosphate-dependent aminotransferase family. Homodimer. The cofactor is pyridoxal 5'-phosphate.

It is found in the cytoplasm. It catalyses the reaction 4-amino-4-deoxychorismate = 4-aminobenzoate + pyruvate + H(+). It functions in the pathway cofactor biosynthesis; tetrahydrofolate biosynthesis; 4-aminobenzoate from chorismate: step 2/2. Converts 4-amino-4-deoxychorismate into 4-aminobenzoate (PABA) and pyruvate. This is Aminodeoxychorismate lyase (ABZ2) from Saccharomyces cerevisiae (strain ATCC 204508 / S288c) (Baker's yeast).